Here is a 171-residue protein sequence, read N- to C-terminus: MVNNRSSESTTTAVSSNGSPPKACAGCGGKIGDRFLLYSMDRYWHTRCLKCSCCQAQLGEIGTSCYTKSGMILCRNDYIRLFGNSGACNACGQSIPASEMVMRAQGSVYHLKCFTCATCRNRLVPGDRFHYVNGTIFCEHDRPTGLLNGHLNPLQSNPLQGSPMLPDQKVC.

Over residues Met-1 to Ser-19 the composition is skewed to polar residues. A disordered region spans residues Met-1 to Pro-21. 2 LIM zinc-binding domains span residues Lys-22 to Asn-84 and Gly-86 to Asn-148.

At the start of gastrulation (stage 10), expressed in the mesodermal marginal zone. Shortly after (stage 11), expression is down-regulated in the dorsal most region. During neurulation, expressed in the neural plate and ventral epidermis. At late neurula stages, also expressed more rostrally, and then in the brain, migrating neural crests and ventral epidermis.

In terms of biological role, acts as a positive cofactor of GATA transcription factors to establish the identity of the ventral mesoderm during gastrulation. Down-regulation in the dorsal mesoderm is necessary for the proper formation of this territory since, when present, lmo4 may bind ldb1 and restrict the availability of this cofactor for Spemman organizer transcription factors. At neurula stages, suppresses primary neuron differentiation and modulates gene expression at the Isthmic Organizer of the midbrain-hindbrain boundary. The polypeptide is LIM domain transcription factor LMO4-A (lmo4-a) (Xenopus laevis (African clawed frog)).